The following is a 305-amino-acid chain: UDP-N-acetylenolpyruvoylglucosamine reductase 2 (305 aa).

One can recognise an FAD-binding PCMH-type domain in the interval 33–197; the sequence is VGGKADVFVA…LEARFELEEG (165 aa). Arg176 is an active-site residue. The active-site Proton donor is the Ser226. Residue Glu296 is part of the active site.

It belongs to the MurB family. It depends on FAD as a cofactor.

The protein resides in the cytoplasm. The enzyme catalyses UDP-N-acetyl-alpha-D-muramate + NADP(+) = UDP-N-acetyl-3-O-(1-carboxyvinyl)-alpha-D-glucosamine + NADPH + H(+). Its pathway is cell wall biogenesis; peptidoglycan biosynthesis. Cell wall formation. This Bacillus cereus (strain ATCC 14579 / DSM 31 / CCUG 7414 / JCM 2152 / NBRC 15305 / NCIMB 9373 / NCTC 2599 / NRRL B-3711) protein is UDP-N-acetylenolpyruvoylglucosamine reductase 2 (murB2).